The following is a 130-amino-acid chain: Small ribosomal subunit protein uS11 (130 aa).

The protein belongs to the universal ribosomal protein uS11 family. Part of the 30S ribosomal subunit. Interacts with proteins S7 and S18. Binds to IF-3.

Functionally, located on the platform of the 30S subunit, it bridges several disparate RNA helices of the 16S rRNA. Forms part of the Shine-Dalgarno cleft in the 70S ribosome. The sequence is that of Small ribosomal subunit protein uS11 from Xanthomonas campestris pv. campestris (strain B100).